The following is a 270-amino-acid chain: Photosystem I chlorophyll a/b-binding protein 6, chloroplastic (270 aa).

The N-terminal 33 residues, 1 to 33 (MAFAIASALTSTLTLSTSRVQNPTQRRPHVAST), are a transit peptide targeting the chloroplast. Residues 16 to 36 (STSRVQNPTQRRPHVASTSST) form a disordered region. Positions 19 to 36 (RVQNPTQRRPHVASTSST) are enriched in polar residues. Trp68 serves as a coordination point for chlorophyll b. Chlorophyll a-binding residues include Phe88 and Glu107. Arg112 contributes to the chlorophyll b binding site. Residues 146–164 (YFADSTTLFVAQMVLMGWA) traverse the membrane as a helical segment. 2 residues coordinate chlorophyll b: Glu165 and Arg168. Chlorophyll a contacts are provided by Lys221, Glu222, Asn225, Arg227, Gln239, and His254. Residues 228–244 (LAMLAFLGFCFQATYTS) form a helical membrane-spanning segment.

It belongs to the light-harvesting chlorophyll a/b-binding (LHC) protein family. The LHC complex consists of chlorophyll a-b binding proteins. Homodimer. Binds pigments. Element of the NAD(P)H dehydrogenase-photosystem I supercomplex (NDH-PSI). The cofactor is Binds at least 14 chlorophylls (8 Chl-a and 6 Chl-b) and carotenoids such as lutein and neoxanthin.. Photoregulated by reversible phosphorylation of its threonine residues.

It is found in the plastid. It localises to the chloroplast thylakoid membrane. Its function is as follows. The light-harvesting complex (LHC) functions as a light receptor, it captures and delivers excitation energy to photosystems with which it is closely associated. Seems involved in the function of the photosystem I in low light conditions, when other LHCA proteins are less abundant. Required, together with LHCA5, for the formation of a full-size NAD(P)H dehydrogenase-photosystem I supercomplex (NDH-PSI) that triggers cyclic and chlororespiratory electron transport in chloroplast thylakoids, especially under stress conditions (e.g. increased light intensity). The polypeptide is Photosystem I chlorophyll a/b-binding protein 6, chloroplastic (Arabidopsis thaliana (Mouse-ear cress)).